A 472-amino-acid polypeptide reads, in one-letter code: Ribosomal protein uS12 methylthiotransferase RimO (472 aa).

An MTTase N-terminal domain is found at 33–143 (NRIGFVSLGC…VLKHVHKYVP (111 aa)). [4Fe-4S] cluster-binding residues include Cys-42, Cys-78, Cys-107, Cys-175, Cys-179, and Cys-182. Residues 161 to 398 (LTPKHYAYLK…MELQAEISAE (238 aa)) enclose the Radical SAM core domain. Residues 401-467 (ARFVGRTLDI…EHDLWAEVVD (67 aa)) form the TRAM domain.

It belongs to the methylthiotransferase family. RimO subfamily. It depends on [4Fe-4S] cluster as a cofactor.

The protein localises to the cytoplasm. The enzyme catalyses L-aspartate(89)-[ribosomal protein uS12]-hydrogen + (sulfur carrier)-SH + AH2 + 2 S-adenosyl-L-methionine = 3-methylsulfanyl-L-aspartate(89)-[ribosomal protein uS12]-hydrogen + (sulfur carrier)-H + 5'-deoxyadenosine + L-methionine + A + S-adenosyl-L-homocysteine + 2 H(+). Catalyzes the methylthiolation of an aspartic acid residue of ribosomal protein uS12. The sequence is that of Ribosomal protein uS12 methylthiotransferase RimO from Shewanella sp. (strain W3-18-1).